The following is a 709-amino-acid chain: RxLR effector protein PITG_15110 (709 aa).

The first 18 residues, 1-18 (MHAYSAAVLMGLLMVAEG), serve as a signal peptide directing secretion. The RxLR-dEER motif lies at 51–66 (RLLREPETTEASNEDR).

It belongs to the RxLR effector family.

The protein resides in the secreted. Its subcellular location is the host cytoplasm. It is found in the host cytoskeleton. Its function is as follows. Effector that enhances P.infestans colonization of Nicotiana benthamiana leaves. The sequence is that of RxLR effector protein PITG_15110 from Phytophthora infestans (strain T30-4) (Potato late blight agent).